A 212-amino-acid chain; its full sequence is Phosphoribosylformylglycinamidine synthase subunit PurQ (212 aa).

In terms of domain architecture, Glutamine amidotransferase type-1 spans 2-212; it reads RIAVLKFPGT…WLGLISWLRR (211 aa). Cys85 (nucleophile) is an active-site residue. Active-site residues include His183, Glu185, and His191.

In terms of assembly, part of the FGAM synthase complex composed of 1 PurL, 1 PurQ and 2 PurS subunits.

The protein resides in the cytoplasm. It catalyses the reaction N(2)-formyl-N(1)-(5-phospho-beta-D-ribosyl)glycinamide + L-glutamine + ATP + H2O = 2-formamido-N(1)-(5-O-phospho-beta-D-ribosyl)acetamidine + L-glutamate + ADP + phosphate + H(+). The enzyme catalyses L-glutamine + H2O = L-glutamate + NH4(+). It participates in purine metabolism; IMP biosynthesis via de novo pathway; 5-amino-1-(5-phospho-D-ribosyl)imidazole from N(2)-formyl-N(1)-(5-phospho-D-ribosyl)glycinamide: step 1/2. Its function is as follows. Part of the phosphoribosylformylglycinamidine synthase complex involved in the purines biosynthetic pathway. Catalyzes the ATP-dependent conversion of formylglycinamide ribonucleotide (FGAR) and glutamine to yield formylglycinamidine ribonucleotide (FGAM) and glutamate. The FGAM synthase complex is composed of three subunits. PurQ produces an ammonia molecule by converting glutamine to glutamate. PurL transfers the ammonia molecule to FGAR to form FGAM in an ATP-dependent manner. PurS interacts with PurQ and PurL and is thought to assist in the transfer of the ammonia molecule from PurQ to PurL. This chain is Phosphoribosylformylglycinamidine synthase subunit PurQ, found in Pyrobaculum aerophilum (strain ATCC 51768 / DSM 7523 / JCM 9630 / CIP 104966 / NBRC 100827 / IM2).